The primary structure comprises 182 residues: uncharacterized protein (182 aa).

Belongs to the mimivirus L6/L7/L57 family.

This is an uncharacterized protein from Acanthamoeba polyphaga mimivirus (APMV).